The following is a 180-amino-acid chain: MMLSQIASKQAENGERAGSPDVLRCSSQMDCKPRFDLSSKGHRKDSDKSRNRKEDDSLAEASHSKKTVKKVVVVEQNGSFQVKIPKNFICEHCFGAFRSSYHLKRHVLIHTGEKPFECDVCDMRFIQKYHLERHKRVHSGEKPYQCERCHQCFSRTDRLLRHKRMCQGCQSKTSEGQFSL.

Residues 1 to 11 show a composition bias toward polar residues; sequence MMLSQIASKQA. The segment at 1 to 62 is disordered; the sequence is MMLSQIASKQ…KEDDSLAEAS (62 aa). Residue Lys-9 forms a Glycyl lysine isopeptide (Lys-Gly) (interchain with G-Cter in SUMO2) linkage. Residue Ser-19 is modified to Phosphoserine. Positions 31-56 are enriched in basic and acidic residues; sequence CKPRFDLSSKGHRKDSDKSRNRKEDD. 2 C2H2-type zinc fingers span residues 88–110 and 116–138; these read FICEHCFGAFRSSYHLKRHVLIH and FECDVCDMRFIQKYHLERHKRVH. Residues 144–166 form a C2H2-type 3; atypical zinc finger; that stretch reads YQCERCHQCFSRTDRLLRHKRMC.

The protein belongs to the krueppel C2H2-type zinc-finger protein family.

The protein localises to the nucleus. In terms of biological role, may be involved in transcriptional regulation. This is Zinc finger protein 740 (Znf740) from Mus musculus (Mouse).